Here is a 354-residue protein sequence, read N- to C-terminus: tRNA N6-adenosine threonylcarbamoyltransferase (354 aa).

Fe cation-binding residues include His-116 and His-120. Substrate-binding positions include 139–143 (LVSGG), Asp-172, Gly-185, and Asn-281. Fe cation is bound at residue Asp-309.

This sequence belongs to the KAE1 / TsaD family. Fe(2+) serves as cofactor.

It localises to the cytoplasm. The enzyme catalyses L-threonylcarbamoyladenylate + adenosine(37) in tRNA = N(6)-L-threonylcarbamoyladenosine(37) in tRNA + AMP + H(+). Its function is as follows. Required for the formation of a threonylcarbamoyl group on adenosine at position 37 (t(6)A37) in tRNAs that read codons beginning with adenine. Is involved in the transfer of the threonylcarbamoyl moiety of threonylcarbamoyl-AMP (TC-AMP) to the N6 group of A37, together with TsaE and TsaB. TsaD likely plays a direct catalytic role in this reaction. This chain is tRNA N6-adenosine threonylcarbamoyltransferase, found in Parasynechococcus marenigrum (strain WH8102).